Reading from the N-terminus, the 147-residue chain is Submaxillary gland androgen-regulated protein 3A (147 aa).

An N-terminal signal peptide occupies residues 1–22 (MKPLNLVLGLCILVGCFLSCEC). The disordered stretch occupies residues 27 to 128 (RRHDPRGPFP…ISITTPTARD (102 aa)). Positions 33 to 105 (GPFPPPPPPH…PTPSIPPTGP (73 aa)) are enriched in pro residues. 3 repeat units span residues 43 to 54 (GPGIGRPHPPPF), 55 to 66 (GPGIGRPPPPPF), and 67 to 78 (GPGIGRPPPPPP). The interval 43-78 (GPGIGRPHPPPFGPGIGRPPPPPFGPGIGRPPPPPP) is 3 X 12 AA tandem repeats of G-P-G-I-G-R-P-[HP]-P-P-P-[PF]. The segment covering 108–127 (TVQATTMPAASISITTPTAR) has biased composition (polar residues).

This sequence belongs to the PROL1/PROL3 family. Secreted into saliva by submaxillary gland.

Its subcellular location is the secreted. Functionally, may play a role in protection or detoxification. In Mus musculus (Mouse), this protein is Submaxillary gland androgen-regulated protein 3A (Smr3a).